We begin with the raw amino-acid sequence, 1263 residues long: Valine--tRNA ligase (1263 aa).

Serine 2 carries the post-translational modification N-acetylserine. Positions 89-219 (GSRAAVLVQQ…YSGARSVTQQ (131 aa)) constitute a GST C-terminal domain. Residues 218-294 (QQPGSEVIAP…PGEKKDVSGA (77 aa)) form a disordered region. 2 stretches are compositionally biased toward basic and acidic residues: residues 234–248 (LKKEAKKREKLEKFQ) and 259–274 (HGEKKPKPEKKEKRDP). The 'HIGH' region signature appears at 343 to 353 (PNVTGSLHLGH). Residues serine 436 and serine 526 each carry the phosphoserine modification. The residue at position 644 (lysine 644) is an N6-acetyllysine. The short motif at 861-865 (KMSKS) is the 'KMSKS' region element. Residue lysine 864 participates in ATP binding.

It belongs to the class-I aminoacyl-tRNA synthetase family. In terms of assembly, forms high-molecular-mass aggregates with elongation factor 1.

The catalysed reaction is tRNA(Val) + L-valine + ATP = L-valyl-tRNA(Val) + AMP + diphosphate. Its activity is regulated as follows. Can be regulated by protein kinase C-dependent phosphorylation. This Mus musculus (Mouse) protein is Valine--tRNA ligase (Vars1).